Consider the following 436-residue polypeptide: Na(+)/H(+) antiporter NhaA 2 (436 aa).

11 helical membrane-spanning segments follow: residues 35–55 (FGGG…NSPW), 80–100 (LATW…GLEL), 116–136 (ALPV…YVGI), 147–167 (GWAI…AVIG), 176–196 (AFLL…IAIF), 201–221 (FKLT…LLVQ), 226–246 (WWWA…ESGV), 283–303 (VSAG…SLRG), 313–333 (PIVV…IFGS), 354–374 (LLGV…IGEL), and 385–405 (VKAA…AVLS).

This sequence belongs to the NhaA Na(+)/H(+) (TC 2.A.33) antiporter family.

The protein resides in the cell membrane. The catalysed reaction is Na(+)(in) + 2 H(+)(out) = Na(+)(out) + 2 H(+)(in). Functionally, na(+)/H(+) antiporter that extrudes sodium in exchange for external protons. The chain is Na(+)/H(+) antiporter NhaA 2 from Salinispora arenicola (strain CNS-205).